A 326-amino-acid polypeptide reads, in one-letter code: Aspartate carbamoyltransferase catalytic subunit (326 aa).

Positions 65 and 66 each coordinate carbamoyl phosphate. Lys-93 provides a ligand contact to L-aspartate. Residues Arg-115, His-143, and Gln-146 each contribute to the carbamoyl phosphate site. Positions 176 and 230 each coordinate L-aspartate. Carbamoyl phosphate-binding residues include Gly-271 and Pro-272.

This sequence belongs to the aspartate/ornithine carbamoyltransferase superfamily. ATCase family. In terms of assembly, heterododecamer (2C3:3R2) of six catalytic PyrB chains organized as two trimers (C3), and six regulatory PyrI chains organized as three dimers (R2).

The catalysed reaction is carbamoyl phosphate + L-aspartate = N-carbamoyl-L-aspartate + phosphate + H(+). The protein operates within pyrimidine metabolism; UMP biosynthesis via de novo pathway; (S)-dihydroorotate from bicarbonate: step 2/3. In terms of biological role, catalyzes the condensation of carbamoyl phosphate and aspartate to form carbamoyl aspartate and inorganic phosphate, the committed step in the de novo pyrimidine nucleotide biosynthesis pathway. The chain is Aspartate carbamoyltransferase catalytic subunit from Mesorhizobium japonicum (strain LMG 29417 / CECT 9101 / MAFF 303099) (Mesorhizobium loti (strain MAFF 303099)).